We begin with the raw amino-acid sequence, 281 residues long: Pseudouridine-5'-phosphate glycosidase (281 aa).

Glu-9 acts as the Proton donor in catalysis. Lys-69 and Val-89 together coordinate substrate. A Mn(2+)-binding site is contributed by Asp-118. Residue 120–122 (SAD) participates in substrate binding. Lys-139 serves as the catalytic Nucleophile.

The protein belongs to the pseudouridine-5'-phosphate glycosidase family. As to quaternary structure, homotrimer. Mn(2+) serves as cofactor.

The enzyme catalyses D-ribose 5-phosphate + uracil = psi-UMP + H2O. Catalyzes the reversible cleavage of pseudouridine 5'-phosphate (PsiMP) to ribose 5-phosphate and uracil. Functions biologically in the cleavage direction, as part of a pseudouridine degradation pathway. This chain is Pseudouridine-5'-phosphate glycosidase, found in Thermus thermophilus (strain ATCC BAA-163 / DSM 7039 / HB27).